The chain runs to 187 residues: UPF0301 protein lpl0620 (187 aa).

Belongs to the UPF0301 (AlgH) family.

In Legionella pneumophila (strain Lens), this protein is UPF0301 protein lpl0620.